The primary structure comprises 344 residues: N-acetyl-gamma-glutamyl-phosphate reductase (344 aa).

Cys148 is an active-site residue.

The protein belongs to the NAGSA dehydrogenase family. Type 1 subfamily.

It localises to the cytoplasm. The enzyme catalyses N-acetyl-L-glutamate 5-semialdehyde + phosphate + NADP(+) = N-acetyl-L-glutamyl 5-phosphate + NADPH + H(+). Its pathway is amino-acid biosynthesis; L-arginine biosynthesis; N(2)-acetyl-L-ornithine from L-glutamate: step 3/4. Functionally, catalyzes the NADPH-dependent reduction of N-acetyl-5-glutamyl phosphate to yield N-acetyl-L-glutamate 5-semialdehyde. This Clostridium kluyveri (strain NBRC 12016) protein is N-acetyl-gamma-glutamyl-phosphate reductase.